A 116-amino-acid polypeptide reads, in one-letter code: NADH-ubiquinone oxidoreductase chain 3 (116 aa).

3 helical membrane-spanning segments follow: residues 3 to 23 (LITT…TISF), 56 to 76 (FFLI…LLPL), and 85 to 105 (PALT…GLIY).

Belongs to the complex I subunit 3 family.

It is found in the mitochondrion membrane. The catalysed reaction is a ubiquinone + NADH + 5 H(+)(in) = a ubiquinol + NAD(+) + 4 H(+)(out). In terms of biological role, core subunit of the mitochondrial membrane respiratory chain NADH dehydrogenase (Complex I) that is believed to belong to the minimal assembly required for catalysis. Complex I functions in the transfer of electrons from NADH to the respiratory chain. The immediate electron acceptor for the enzyme is believed to be ubiquinone. The polypeptide is NADH-ubiquinone oxidoreductase chain 3 (MT-ND3) (Salmo salar (Atlantic salmon)).